A 1171-amino-acid polypeptide reads, in one-letter code: 7,8-linoleate diol synthase (1171 aa).

Low complexity predominate over residues 1 to 22 (MASSSSSGSSTRSSSPSDPPSS). The disordered stretch occupies residues 1-56 (MASSSSSGSSTRSSSPSDPPSSFFQKLGAFLGLFSKPQPPRPDYPHAPGNSAREEQ). Residues 114-457 (TDGLITGLWE…DGSFEDEGLI (344 aa)) form a fatty acid alpha-dioxygenase region. His213 lines the heme b pocket. Positions 214, 229, 231, 233, and 235 each coordinate Ca(2+). Tyr385 is an active-site residue. His388 contributes to the heme b binding site. Residues 675–1171 (KILNNQKDFK…PMNMKIRWDD (497 aa)) form an epoxy alcohol synthase region. The disordered stretch occupies residues 873-900 (GLANGGANGHANGNANGHTNGNGIHQNG). Low complexity predominate over residues 881–895 (GHANGNANGHTNGNG). A heme-binding site is contributed by Cys1089.

In the N-terminal section; belongs to the peroxidase family. This sequence in the C-terminal section; belongs to the cytochrome P450 family. As to quaternary structure, homotetramer. It depends on heme b as a cofactor. Ca(2+) is required as a cofactor. Requires heme as cofactor.

The catalysed reaction is (9Z,12Z)-octadecadienoate + O2 = (8R,9Z,12Z)-8-hydroperoxyoctadeca-9,12-dienoate. The enzyme catalyses (8R,9Z,12Z)-8-hydroperoxyoctadeca-9,12-dienoate = (7S,8S,9Z,12Z)-7,8-dihydroxyoctadeca-9,12-dienoate. Functionally, 7,8-linoleate diol synthase is a bifunctional enzyme that converts linoleic acid (18:2n-6) into 8-hydroperoxy-8(E),12(Z)-octadecadienoic acid (8-HPODE) and then catalyzes the isomerization of the resulting hydroperoxide to 7,8-dihydroxy-9(Z),12(Z)-octadecadienoic acid (7,8-DiHODE). The polypeptide is 7,8-linoleate diol synthase (Pyricularia oryzae (strain 70-15 / ATCC MYA-4617 / FGSC 8958) (Rice blast fungus)).